The chain runs to 274 residues: Diaminopimelate epimerase (274 aa).

Positions 11, 44, and 64 each coordinate substrate. C73 serves as the catalytic Proton donor. Substrate-binding positions include 74–75 (GN), N157, N190, and 208–209 (ER). C217 functions as the Proton acceptor in the catalytic mechanism. A substrate-binding site is contributed by 218–219 (GS).

This sequence belongs to the diaminopimelate epimerase family. Homodimer.

The protein localises to the cytoplasm. It carries out the reaction (2S,6S)-2,6-diaminopimelate = meso-2,6-diaminopimelate. It participates in amino-acid biosynthesis; L-lysine biosynthesis via DAP pathway; DL-2,6-diaminopimelate from LL-2,6-diaminopimelate: step 1/1. Its function is as follows. Catalyzes the stereoinversion of LL-2,6-diaminopimelate (L,L-DAP) to meso-diaminopimelate (meso-DAP), a precursor of L-lysine and an essential component of the bacterial peptidoglycan. This chain is Diaminopimelate epimerase, found in Actinobacillus pleuropneumoniae serotype 7 (strain AP76).